Here is a 430-residue protein sequence, read N- to C-terminus: UDP-N-acetylglucosamine 1-carboxyvinyltransferase 1 (430 aa).

Residue 22–23 (KN) participates in phosphoenolpyruvate binding. Arginine 93 serves as a coordination point for UDP-N-acetyl-alpha-D-glucosamine. Catalysis depends on cysteine 117, which acts as the Proton donor. Cysteine 117 is subject to 2-(S-cysteinyl)pyruvic acid O-phosphothioketal. UDP-N-acetyl-alpha-D-glucosamine contacts are provided by residues 122 to 126 (RPVDL), aspartate 305, and valine 327.

Belongs to the EPSP synthase family. MurA subfamily.

It is found in the cytoplasm. The enzyme catalyses phosphoenolpyruvate + UDP-N-acetyl-alpha-D-glucosamine = UDP-N-acetyl-3-O-(1-carboxyvinyl)-alpha-D-glucosamine + phosphate. Its pathway is cell wall biogenesis; peptidoglycan biosynthesis. Its function is as follows. Cell wall formation. Adds enolpyruvyl to UDP-N-acetylglucosamine. The polypeptide is UDP-N-acetylglucosamine 1-carboxyvinyltransferase 1 (Listeria monocytogenes serotype 4b (strain F2365)).